The following is a 269-amino-acid chain: Shikimate dehydrogenase (NADP(+)) (269 aa).

Residues 14 to 16 and threonine 60 each bind shikimate; that span reads TLS. Catalysis depends on lysine 64, which acts as the Proton acceptor. NADP(+) is bound at residue aspartate 76. Asparagine 85 and aspartate 100 together coordinate shikimate. Residues 122-126 and methionine 208 contribute to the NADP(+) site; that span reads GAGGA. Tyrosine 210 contributes to the shikimate binding site. Glycine 232 contributes to the NADP(+) binding site.

It belongs to the shikimate dehydrogenase family. Homodimer.

The enzyme catalyses shikimate + NADP(+) = 3-dehydroshikimate + NADPH + H(+). It functions in the pathway metabolic intermediate biosynthesis; chorismate biosynthesis; chorismate from D-erythrose 4-phosphate and phosphoenolpyruvate: step 4/7. Functionally, involved in the biosynthesis of the chorismate, which leads to the biosynthesis of aromatic amino acids. Catalyzes the reversible NADPH linked reduction of 3-dehydroshikimate (DHSA) to yield shikimate (SA). This chain is Shikimate dehydrogenase (NADP(+)), found in Caldivirga maquilingensis (strain ATCC 700844 / DSM 13496 / JCM 10307 / IC-167).